Consider the following 118-residue polypeptide: Small ribosomal subunit protein uS13 (118 aa).

The tract at residues 91–118 (HRHSLPVRGQRTKTNARTRKGPRKPIRK) is disordered.

This sequence belongs to the universal ribosomal protein uS13 family. As to quaternary structure, part of the 30S ribosomal subunit. Forms a loose heterodimer with protein S19. Forms two bridges to the 50S subunit in the 70S ribosome.

Its function is as follows. Located at the top of the head of the 30S subunit, it contacts several helices of the 16S rRNA. In the 70S ribosome it contacts the 23S rRNA (bridge B1a) and protein L5 of the 50S subunit (bridge B1b), connecting the 2 subunits; these bridges are implicated in subunit movement. Contacts the tRNAs in the A and P-sites. This Hahella chejuensis (strain KCTC 2396) protein is Small ribosomal subunit protein uS13.